Consider the following 127-residue polypeptide: Small ribosomal subunit protein uS13 (127 aa).

Residues 100-127 form a disordered region; it reads GQRTRTNARTRKGVRKTVAGKKKAPAKK. Over residues 101–127 the composition is skewed to basic residues; sequence QRTRTNARTRKGVRKTVAGKKKAPAKK.

It belongs to the universal ribosomal protein uS13 family. As to quaternary structure, part of the 30S ribosomal subunit. Forms a loose heterodimer with protein S19. Forms two bridges to the 50S subunit in the 70S ribosome.

Its function is as follows. Located at the top of the head of the 30S subunit, it contacts several helices of the 16S rRNA. In the 70S ribosome it contacts the 23S rRNA (bridge B1a) and protein L5 of the 50S subunit (bridge B1b), connecting the 2 subunits; these bridges are implicated in subunit movement. Contacts the tRNAs in the A and P-sites. In Synechococcus sp. (strain JA-3-3Ab) (Cyanobacteria bacterium Yellowstone A-Prime), this protein is Small ribosomal subunit protein uS13.